A 350-amino-acid polypeptide reads, in one-letter code: Chorismate synthase (350 aa).

NADP(+) is bound by residues R39 and R45. Residues 119-121 (RSS), 213-214 (QA), G258, 273-277 (KPIPT), and R299 contribute to the FMN site.

The protein belongs to the chorismate synthase family. As to quaternary structure, homotetramer. FMNH2 serves as cofactor.

It catalyses the reaction 5-O-(1-carboxyvinyl)-3-phosphoshikimate = chorismate + phosphate. Its pathway is metabolic intermediate biosynthesis; chorismate biosynthesis; chorismate from D-erythrose 4-phosphate and phosphoenolpyruvate: step 7/7. In terms of biological role, catalyzes the anti-1,4-elimination of the C-3 phosphate and the C-6 proR hydrogen from 5-enolpyruvylshikimate-3-phosphate (EPSP) to yield chorismate, which is the branch point compound that serves as the starting substrate for the three terminal pathways of aromatic amino acid biosynthesis. This reaction introduces a second double bond into the aromatic ring system. The protein is Chorismate synthase of Thermoanaerobacter pseudethanolicus (strain ATCC 33223 / 39E) (Clostridium thermohydrosulfuricum).